The following is a 686-amino-acid chain: MKGTSALLLIGFFHATISQDPGGTVVIGSLSGRKRGNLNTGGQITSNSAILGDVNAGSKLSEPPKRRNTDKTARMLENNPRIGGSLIPPPGVIMEPNPYDINPPYFVSNKNSQSTNSATNTMLQSLTSDTKTTTRTSQTSSTRASSSITQGINTMNRNSMRFNQVDRNKISGFVNSGGQIQTNPLNTNSQSSPILAAQRQITRQKSENTQGNSIVRNGGTNSLNIPSSTRRSQPPNMAVQIGQNTATFNMGTDGKVLHKFLPTNLFENINSVSKEPRNTASVPGIGGMRNPGPSISIRNIFGTNNIEGSSVQLTGSSGVFVSDPGPKGNPTDVPQFVPSGISPTVRDPNALDPFKSIRNQIVPDIKRNEVNRGNSMISAPVIDNPTNSNSMVELNSILQNVQNGFLSEALGNSNNQNNRVTNIVNQINSADPQPVRRCQFLPYRDLRTNKIDRRYFRQLVNGKWLNLKCADGAGFNETTCLCSIHLTGDAQCSPEVRLNFNDGTIQNLTPINVHIDAEGVDASKGWAHFNGSTQMKFEYFNAYDVQRDFLIKLRFKADSYIPNQSHPIVTNCVAGQENTDPSIGVFLTGNYPHKIVFILQTDKSKLLQHLIFDVPRDGWHDITYKYDGSTLTGILDGKEKSLPTEGRIENRQAVLVFGGCGNRIFRGNIDDIQIYTCIPPSHRNKG.

Residues 1–18 form the signal peptide; it reads MKGTSALLLIGFFHATIS. Disordered stretches follow at residues 34 to 73, 125 to 148, and 201 to 236; these read KRGN…DKTA, SLTS…SSSI, and ITRQ…QPPN. Polar residues predominate over residues 37–49; that stretch reads NLNTGGQITSNSA. A compositionally biased stretch (basic and acidic residues) spans 62–73; sequence EPPKRRNTDKTA.

In terms of tissue distribution, prismatic layer of shell (at protein level). Expressed primarily in the mantle with highest level in the mantle edge and lower level in the mantle pallium.

The protein localises to the secreted. The protein is Asparagine-rich protein of Margaritifera margaritifera (Freshwater pearl mussel).